The sequence spans 265 residues: Indole-3-glycerol phosphate synthase (265 aa).

It belongs to the TrpC family.

The catalysed reaction is 1-(2-carboxyphenylamino)-1-deoxy-D-ribulose 5-phosphate + H(+) = (1S,2R)-1-C-(indol-3-yl)glycerol 3-phosphate + CO2 + H2O. Its pathway is amino-acid biosynthesis; L-tryptophan biosynthesis; L-tryptophan from chorismate: step 4/5. The polypeptide is Indole-3-glycerol phosphate synthase (Xanthomonas oryzae pv. oryzae (strain PXO99A)).